The sequence spans 227 residues: Translation initiation factor 6 (227 aa).

It belongs to the eIF-6 family.

Functionally, binds to the 50S ribosomal subunit and prevents its association with the 30S ribosomal subunit to form the 70S initiation complex. The sequence is that of Translation initiation factor 6 from Methanococcus maripaludis (strain C6 / ATCC BAA-1332).